Reading from the N-terminus, the 122-residue chain is Large ribosomal subunit protein uL14 (122 aa).

This sequence belongs to the universal ribosomal protein uL14 family. In terms of assembly, part of the 50S ribosomal subunit. Forms a cluster with proteins L3 and L19. In the 70S ribosome, L14 and L19 interact and together make contacts with the 16S rRNA in bridges B5 and B8.

In terms of biological role, binds to 23S rRNA. Forms part of two intersubunit bridges in the 70S ribosome. The chain is Large ribosomal subunit protein uL14 from Methylobacillus flagellatus (strain ATCC 51484 / DSM 6875 / VKM B-1610 / KT).